A 347-amino-acid chain; its full sequence is Phosphoribosylformylglycinamidine cyclo-ligase (347 aa).

Belongs to the AIR synthase family.

Its subcellular location is the cytoplasm. The enzyme catalyses 2-formamido-N(1)-(5-O-phospho-beta-D-ribosyl)acetamidine + ATP = 5-amino-1-(5-phospho-beta-D-ribosyl)imidazole + ADP + phosphate + H(+). Its pathway is purine metabolism; IMP biosynthesis via de novo pathway; 5-amino-1-(5-phospho-D-ribosyl)imidazole from N(2)-formyl-N(1)-(5-phospho-D-ribosyl)glycinamide: step 2/2. This chain is Phosphoribosylformylglycinamidine cyclo-ligase, found in Yersinia pseudotuberculosis serotype O:1b (strain IP 31758).